The primary structure comprises 979 residues: Pro-apoptotic serine protease NMA111 (979 aa).

The segment covering 1–20 (MKRNGESHLNGEAKKSRTEQ) has biased composition (basic and acidic residues). Residues 1–43 (MKRNGESHLNGEAKKSRTEQNQEQQDYQDEYYSSSDEELLPSS) are disordered. A compositionally biased stretch (low complexity) spans 21 to 34 (NQEQQDYQDEYYSS). Residues 65–260 (KVVNSVVSIQ…LPVSRPKRAL (196 aa)) form a serine protease region. Active-site charge relay system residues include His-108, Asp-139, and Ser-222. 2 PDZ domains span residues 277–362 (EWQL…FVFQ) and 871–943 (PHYG…VSFD).

This sequence belongs to the peptidase S1C family.

The protein resides in the nucleus. Functionally, nuclear serine protease which mediates apoptosis. This chain is Pro-apoptotic serine protease NMA111 (NMA111), found in Lodderomyces elongisporus (strain ATCC 11503 / CBS 2605 / JCM 1781 / NBRC 1676 / NRRL YB-4239) (Yeast).